Consider the following 286-residue polypeptide: Soluble epoxide hydrolase (286 aa).

Positions 26 to 123 (YPLVLLHGWP…DLVERLFILD (98 aa)) constitute an AB hydrolase-1 domain. The active-site Nucleophile is Asp-99. The active-site Proton donor is Tyr-209. The Proton acceptor role is filled by His-264.

The protein belongs to the AB hydrolase superfamily. Epoxide hydrolase family. Homotetramer.

It is found in the cytoplasm. The protein resides in the cell membrane. It carries out the reaction an epoxide + H2O = an ethanediol. Functionally, involved in catabolic degradation of epoxides. Shows highest activity towards C6 and C7 carbocyclic epoxides. Also active towards linear 1,2-epoxyalkanes. The polypeptide is Soluble epoxide hydrolase (Corynebacterium sp. (strain C12)).